Reading from the N-terminus, the 350-residue chain is Biotin synthase (350 aa).

The region spanning 41–268 is the Radical SAM core domain; sequence NEVQISRLLS…LSRVRLSAGR (228 aa). Positions 56, 60, and 63 each coordinate [4Fe-4S] cluster. Cys-100, Cys-131, Cys-191, and Arg-263 together coordinate [2Fe-2S] cluster.

This sequence belongs to the radical SAM superfamily. Biotin synthase family. As to quaternary structure, homodimer. [4Fe-4S] cluster is required as a cofactor. The cofactor is [2Fe-2S] cluster.

The enzyme catalyses (4R,5S)-dethiobiotin + (sulfur carrier)-SH + 2 reduced [2Fe-2S]-[ferredoxin] + 2 S-adenosyl-L-methionine = (sulfur carrier)-H + biotin + 2 5'-deoxyadenosine + 2 L-methionine + 2 oxidized [2Fe-2S]-[ferredoxin]. It participates in cofactor biosynthesis; biotin biosynthesis; biotin from 7,8-diaminononanoate: step 2/2. Catalyzes the conversion of dethiobiotin (DTB) to biotin by the insertion of a sulfur atom into dethiobiotin via a radical-based mechanism. The sequence is that of Biotin synthase from Shewanella baltica (strain OS223).